The primary structure comprises 509 residues: Steroid 17-alpha-hydroxylase/17,20 lyase (509 aa).

Position 440 (Cys440) interacts with heme.

This sequence belongs to the cytochrome P450 family. It depends on heme as a cofactor.

The protein resides in the endoplasmic reticulum membrane. Its subcellular location is the microsome membrane. The enzyme catalyses a C21-steroid + reduced [NADPH--hemoprotein reductase] + O2 = a 17alpha-hydroxy-C21-steroid + oxidized [NADPH--hemoprotein reductase] + H2O + H(+). It carries out the reaction progesterone + reduced [NADPH--hemoprotein reductase] + O2 = 17alpha-hydroxyprogesterone + oxidized [NADPH--hemoprotein reductase] + H2O + H(+). The catalysed reaction is pregnenolone + reduced [NADPH--hemoprotein reductase] + O2 = 17alpha-hydroxypregnenolone + oxidized [NADPH--hemoprotein reductase] + H2O + H(+). It catalyses the reaction 17alpha-hydroxyprogesterone + reduced [NADPH--hemoprotein reductase] + O2 = androst-4-ene-3,17-dione + acetate + oxidized [NADPH--hemoprotein reductase] + H2O + 2 H(+). The enzyme catalyses 17alpha-hydroxyprogesterone + reduced [NADPH--hemoprotein reductase] + O2 = 16alpha,17alpha-dihydroxyprogesterone + oxidized [NADPH--hemoprotein reductase] + H2O + H(+). It carries out the reaction 16alpha,17alpha-dihydroxyprogesterone + reduced [NADPH--hemoprotein reductase] + O2 = 6beta,16alpha,17alpha-trihydroxyprogesterone + oxidized [NADPH--hemoprotein reductase] + H2O + H(+). The catalysed reaction is 17alpha-hydroxypregnenolone + reduced [NADPH--hemoprotein reductase] + O2 = 3beta-hydroxyandrost-5-en-17-one + acetate + oxidized [NADPH--hemoprotein reductase] + H2O + 2 H(+). It catalyses the reaction 16alpha,17alpha-dihydroxypregnenolone + reduced [NADPH--hemoprotein reductase] + O2 = 3beta,16alpha-dihydroxy-androst-5-en-17-one + acetate + oxidized [NADPH--hemoprotein reductase] + H2O + 2 H(+). The enzyme catalyses 3beta-hydroxyandrost-5-en-17-one + reduced [NADPH--hemoprotein reductase] + O2 = 3beta,16alpha-dihydroxy-androst-5-en-17-one + oxidized [NADPH--hemoprotein reductase] + H2O + H(+). It carries out the reaction androst-4-ene-3,17-dione + reduced [NADPH--hemoprotein reductase] + O2 = 16alpha-hydroxyandrost-4-ene-3,17-dione + oxidized [NADPH--hemoprotein reductase] + H2O + H(+). Its pathway is steroid hormone biosynthesis. It participates in steroid biosynthesis; glucocorticoid biosynthesis. Regulated predominantly by intracellular cAMP levels. The 17,20-lyase activity is stimulated by cytochrome b5, which acts as an allosteric effector increasing the Vmax of the lyase activity. Its function is as follows. A cytochrome P450 monooxygenase involved in corticoid and androgen biosynthesis. Catalyzes 17-alpha hydroxylation of C21 steroids, which is common for both pathways. A second oxidative step, required only for androgen synthesis, involves an acyl-carbon cleavage. The 17-alpha hydroxy intermediates, as part of adrenal glucocorticoids biosynthesis pathway, are precursors of cortisol. Hydroxylates steroid hormones, pregnenolone and progesterone to form 17-alpha hydroxy metabolites, followed by the cleavage of the C17-C20 bond to form C19 steroids, dehydroepiandrosterone (DHEA) and androstenedione. Has 16-alpha hydroxylase activity. Catalyzes 16-alpha hydroxylation of 17-alpha hydroxy pregnenolone, followed by the cleavage of the C17-C20 bond to form 16-alpha-hydroxy DHEA. Also 16-alpha hydroxylates androgens, relevant for estriol synthesis. Mechanistically, uses molecular oxygen inserting one oxygen atom into a substrate, and reducing the second into a water molecule, with two electrons provided by NADPH via cytochrome P450 reductase (CPR; NADPH-ferrihemoprotein reductase). This is Steroid 17-alpha-hydroxylase/17,20 lyase (Cyp17a1) from Peromyscus leucopus (White-footed mouse).